The following is a 272-amino-acid chain: Ribonuclease HII (272 aa).

The 186-residue stretch at 87–272 folds into the RNase H type-2 domain; that stretch reads KYVAGVDEVG…HRMSFLKNIL (186 aa). A divalent metal cation-binding residues include Asp-93, Glu-94, and Asp-188.

This sequence belongs to the RNase HII family. Requires Mn(2+) as cofactor. Mg(2+) is required as a cofactor.

The protein localises to the cytoplasm. It carries out the reaction Endonucleolytic cleavage to 5'-phosphomonoester.. In terms of biological role, endonuclease that specifically degrades the RNA of RNA-DNA hybrids. In Clostridium perfringens (strain 13 / Type A), this protein is Ribonuclease HII.